We begin with the raw amino-acid sequence, 115 residues long: NAD(P)H-quinone oxidoreductase subunit M (115 aa).

Belongs to the complex I NdhM subunit family. As to quaternary structure, NDH-1 can be composed of about 15 different subunits; different subcomplexes with different compositions have been identified which probably have different functions.

It localises to the cellular thylakoid membrane. It carries out the reaction a plastoquinone + NADH + (n+1) H(+)(in) = a plastoquinol + NAD(+) + n H(+)(out). The enzyme catalyses a plastoquinone + NADPH + (n+1) H(+)(in) = a plastoquinol + NADP(+) + n H(+)(out). NDH-1 shuttles electrons from an unknown electron donor, via FMN and iron-sulfur (Fe-S) centers, to quinones in the respiratory and/or the photosynthetic chain. The immediate electron acceptor for the enzyme in this species is believed to be plastoquinone. Couples the redox reaction to proton translocation, and thus conserves the redox energy in a proton gradient. Cyanobacterial NDH-1 also plays a role in inorganic carbon-concentration. The protein is NAD(P)H-quinone oxidoreductase subunit M of Parasynechococcus marenigrum (strain WH8102).